A 204-amino-acid chain; its full sequence is Guanylate kinase (204 aa).

In terms of domain architecture, Guanylate kinase-like spans 5–184 (GLLLVLSGPS…AVDHIKSIVE (180 aa)). 12-19 (GPSGVGKG) contributes to the ATP binding site.

The protein belongs to the guanylate kinase family.

The protein resides in the cytoplasm. The enzyme catalyses GMP + ATP = GDP + ADP. Essential for recycling GMP and indirectly, cGMP. This Lactobacillus johnsonii (strain CNCM I-12250 / La1 / NCC 533) protein is Guanylate kinase.